An 854-amino-acid polypeptide reads, in one-letter code: Protein SEY1 homolog (854 aa).

Residues 1–724 are Cytoplasmic-facing; that stretch reads MAAFSGETAV…LRNIESGKQS (724 aa). The GB1/RHD3-type G domain occupies 49-291; it reads GVNYHVVGVF…NSNFLFSNCS (243 aa). GTP is bound at residue 59 to 66; the sequence is GGQSSGKS. Residues 336–386 adopt a coiled-coil conformation; that stretch reads KHAAIEEFKEVCEEYTKKIQRGDVIPQFTRALEETIERLLKNFSDQTKLYK. The helical transmembrane segment at 725-745 threads the bilayer; it reads LPPWVLPVMLLLGWNELYYLL. The Lumenal segment spans residues 746–748; sequence TSP. Residues 749-769 traverse the membrane as a helical segment; that stretch reads ILLIAIIVIAVLFFKTFLKSQ. Residues 770 to 854 are Cytoplasmic-facing; it reads LEVLEEKCPV…CRESRDKGED (85 aa). A disordered region spans residues 808-854; it reads GGGGAQFRDPTQATSVSGASAGVSSESSSAASPRRRVCRESRDKGED. Low complexity predominate over residues 822–839; the sequence is SVSGASAGVSSESSSAAS. The span at 845–854 shows a compositional bias: basic and acidic residues; that stretch reads CRESRDKGED.

Belongs to the TRAFAC class dynamin-like GTPase superfamily. GB1/RHD3 GTPase family. RHD3 subfamily.

The protein resides in the endoplasmic reticulum membrane. In terms of biological role, probable GTP-binding protein that may be involved in cell development. This is Protein SEY1 homolog from Trypanosoma brucei brucei (strain 927/4 GUTat10.1).